A 211-amino-acid polypeptide reads, in one-letter code: MRNIQIALTKGRLEKHVIPLFEQIGIDCSELKNKGRKLVFQSKNTDISFILVKAVDVATYVEHGVADIGVVGKDVLMENEKDIYEMLDLGVGVCKFCVASIPTYNPKSYRKKRIATKYPHITSNYFHDKGEDVEIIKIEGSVEIAPILGLVDAIVDIVETGKTLQENGLIVFEEMYSISARMIVNKAALKTKKDEIFSIINVMEQEILSGK.

Belongs to the ATP phosphoribosyltransferase family. Short subfamily. Heteromultimer composed of HisG and HisZ subunits.

The protein resides in the cytoplasm. It carries out the reaction 1-(5-phospho-beta-D-ribosyl)-ATP + diphosphate = 5-phospho-alpha-D-ribose 1-diphosphate + ATP. It participates in amino-acid biosynthesis; L-histidine biosynthesis; L-histidine from 5-phospho-alpha-D-ribose 1-diphosphate: step 1/9. Functionally, catalyzes the condensation of ATP and 5-phosphoribose 1-diphosphate to form N'-(5'-phosphoribosyl)-ATP (PR-ATP). Has a crucial role in the pathway because the rate of histidine biosynthesis seems to be controlled primarily by regulation of HisG enzymatic activity. The protein is ATP phosphoribosyltransferase of Bacillus cereus (strain ATCC 10987 / NRS 248).